We begin with the raw amino-acid sequence, 131 residues long: MAEKEVRLDKWLWAARFYKTRSIAKAMIESGKVHYNNQRAKVSKIVEVGAMLKLRQGNEEKEIKIIALSDQRRGAPEAQLLYQETESSVKKREEIAWARKNNSLSMPHPDRRPNKKERRDLLKFKHQDKFE.

In terms of domain architecture, S4 RNA-binding spans 6-67; it reads VRLDKWLWAA…NEEKEIKIIA (62 aa). The disordered stretch occupies residues 98–131; sequence ARKNNSLSMPHPDRRPNKKERRDLLKFKHQDKFE. Positions 108-131 are enriched in basic and acidic residues; that stretch reads HPDRRPNKKERRDLLKFKHQDKFE.

The protein belongs to the HSP15 family.

In terms of biological role, involved in the recycling of free 50S ribosomal subunits that still carry a nascent chain. Binds RNA more specifically than DNA. Binds with very high affinity to the free 50S ribosomal subunit. Does not bind it when it is part of the 70S ribosome. This Haemophilus influenzae (strain ATCC 51907 / DSM 11121 / KW20 / Rd) protein is Heat shock protein 15 homolog (hslR).